The primary structure comprises 213 residues: Large ribosomal subunit protein uL1 (213 aa).

It belongs to the universal ribosomal protein uL1 family. As to quaternary structure, part of the 50S ribosomal subunit.

In terms of biological role, binds directly to 23S rRNA. Probably involved in E site tRNA release. Protein L1 is also a translational repressor protein, it controls the translation of its operon by binding to its mRNA. The chain is Large ribosomal subunit protein uL1 from Methanococcus maripaludis (strain DSM 14266 / JCM 13030 / NBRC 101832 / S2 / LL).